The following is a 2238-amino-acid chain: RNA-directed RNA polymerase L (2238 aa).

The tract at residues 26–284 (ITLVTCQNDA…THHSEHPVDC (259 aa)) is endonuclease. 3 residues coordinate Mn(2+): E51, D89, and E102. K115 is a catalytic residue. Positions 1188–1387 (TDMKMCVNLG…FISTKFNKFV (200 aa)) constitute a RdRp catalytic domain. A Mg(2+)-binding site is contributed by D1346.

It belongs to the Bunyavirales RNA polymerase family. In terms of assembly, homomultimer; the oligomeric structure is essential for the polymerase activity. Interacts with nucleoprotein N. Interacts with protein Z; this interaction inhibits viral transcription and replication, Z partially blocks the product exit tunnel for the releasing nascent RNA product. Mn(2+) serves as cofactor. Requires Mg(2+) as cofactor.

The protein resides in the virion. It localises to the host cytoplasm. The catalysed reaction is RNA(n) + a ribonucleoside 5'-triphosphate = RNA(n+1) + diphosphate. In terms of biological role, RNA-dependent RNA polymerase, which is responsible for the replication and transcription of the viral RNA genome using antigenomic RNA as an intermediate. During transcription, synthesizes subgenomic RNAs and assures their capping by a cap-snatching mechanism, which involves the endonuclease activity cleaving the host capped pre-mRNAs. These short capped RNAs are then used as primers for viral transcription. The 3'-end of subgenomic mRNAs molecules are heterogeneous and not polyadenylated. The replicase function is to direct synthesis of antigenomic and genomic RNA which are encapsidated and non capped. As a consequence of the use of the same enzyme for both transcription and replication, these mechanisms need to be well coordinated. These processes may be regulated by proteins N and Z in a dose-dependent manner. Z protein inhibits the viral polymerase L und thus the viral transcription and RNA synthesis. This chain is RNA-directed RNA polymerase L, found in Calomys callosus (Large vesper mouse).